A 229-amino-acid chain; its full sequence is B-cell antigen receptor complex-associated protein beta chain (229 aa).

The N-terminal stretch at 1–28 (MARLALSPVPSHWMVALLLLLSAEPVPA) is a signal peptide. Residues 29–159 (ARSEDRYRNP…QLKQRNTLKD (131 aa)) are Extracellular-facing. In terms of domain architecture, Ig-like V-type spans 38–138 (PKGSACSRIW…TSEVYQGCGT (101 aa)). Cystine bridges form between Cys-43–Cys-126 and Cys-65–Cys-122. 4 N-linked (GlcNAc...) asparagine glycosylation sites follow: Asn-73, Asn-101, Asn-127, and Asn-128. A helical transmembrane segment spans residues 160 to 180 (GIIMIQTLLIILFIIVPIFLL). Residues 181–229 (LDKDDSKAGMEEDHTYEGLDIDQTATYEDIVTLRTGEVKWSVGEHPGQE) are Cytoplasmic-facing. Residues 185–213 (DSKAGMEEDHTYEGLDIDQTATYEDIVTL) enclose the ITAM domain. Residues Tyr-196 and Tyr-207 each carry the phosphotyrosine; by SRC-type Tyr-kinases modification.

Heterodimer of alpha and beta chains; disulfide-linked. Part of the B-cell antigen receptor complex where the alpha/beta chain heterodimer is non-covalently associated with an antigen-specific membrane-bound surface immunoglobulin of two heavy chains and two light chains. Interacts with LYN. Phosphorylated on tyrosine upon B-cell activation by SRC-type Tyr-kinases such as BLK, LYN and SYK. As to expression, B-cells.

Its subcellular location is the cell membrane. Functionally, required in cooperation with CD79A for initiation of the signal transduction cascade activated by the B-cell antigen receptor complex (BCR) which leads to internalization of the complex, trafficking to late endosomes and antigen presentation. Enhances phosphorylation of CD79A, possibly by recruiting kinases which phosphorylate CD79A or by recruiting proteins which bind to CD79A and protect it from dephosphorylation. This is B-cell antigen receptor complex-associated protein beta chain (CD79B) from Homo sapiens (Human).